Consider the following 348-residue polypeptide: UDP-glucose 4-epimerase (348 aa).

NAD(+) is bound by residues 12–14 (GYI), 33–37 (DNFHN), 66–67 (DI), phenylalanine 88, and lysine 92. 132–134 (SAT) provides a ligand contact to substrate. Catalysis depends on tyrosine 157, which acts as the Proton acceptor. NAD(+) is bound by residues lysine 161 and tyrosine 185. Residues 185-187 (YFN), 206-208 (NNL), 224-226 (NVF), arginine 239, and 300-303 (REGD) contribute to the substrate site.

It belongs to the NAD(P)-dependent epimerase/dehydratase family. In terms of assembly, homodimer. NAD(+) serves as cofactor.

It catalyses the reaction UDP-alpha-D-glucose = UDP-alpha-D-galactose. It carries out the reaction UDP-N-acetyl-alpha-D-glucosamine = UDP-N-acetyl-alpha-D-galactosamine. It functions in the pathway carbohydrate metabolism; galactose metabolism. In terms of biological role, catalyzes two distinct but analogous reactions: the reversible epimerization of UDP-glucose to UDP-galactose and the reversible epimerization of UDP-N-acetylglucosamine to UDP-N-acetylgalactosamine. The reaction with UDP-Gal plays a critical role in the Leloir pathway of galactose catabolism in which galactose is converted to the glycolytic intermediate glucose 6-phosphate. It contributes to the catabolism of dietary galactose and enables the endogenous biosynthesis of both UDP-Gal and UDP-GalNAc when exogenous sources are limited. Both UDP-sugar interconversions are important in the synthesis of glycoproteins and glycolipids. The protein is UDP-glucose 4-epimerase of Bos taurus (Bovine).